The chain runs to 264 residues: Thiazole synthase (264 aa).

Lysine 106 serves as the catalytic Schiff-base intermediate with DXP. 1-deoxy-D-xylulose 5-phosphate is bound by residues glycine 167, 193-194 (AG), and 215-216 (NT).

It belongs to the ThiG family. In terms of assembly, homotetramer. Forms heterodimers with either ThiH or ThiS.

The protein resides in the cytoplasm. The catalysed reaction is [ThiS sulfur-carrier protein]-C-terminal-Gly-aminoethanethioate + 2-iminoacetate + 1-deoxy-D-xylulose 5-phosphate = [ThiS sulfur-carrier protein]-C-terminal Gly-Gly + 2-[(2R,5Z)-2-carboxy-4-methylthiazol-5(2H)-ylidene]ethyl phosphate + 2 H2O + H(+). The protein operates within cofactor biosynthesis; thiamine diphosphate biosynthesis. Catalyzes the rearrangement of 1-deoxy-D-xylulose 5-phosphate (DXP) to produce the thiazole phosphate moiety of thiamine. Sulfur is provided by the thiocarboxylate moiety of the carrier protein ThiS. In vitro, sulfur can be provided by H(2)S. This is Thiazole synthase from Stenotrophomonas maltophilia (strain K279a).